The primary structure comprises 428 residues: Stromal membrane-associated protein 2 (428 aa).

The Arf-GAP domain maps to 13 to 139; sequence QAVLANLLLE…INVLRKEKDD (127 aa). Residues 28-51 form a C4-type zinc finger; sequence CADCQSKGPRWASWNIGVFICIRC. A phosphoserine mark is found at Ser-127, Ser-219, Ser-224, Ser-230, and Ser-239. Positions 163 to 231 are interaction with clathrin heavy chains; it reads MPQKKEDAQL…SVSRKAVGSM (69 aa). A disordered region spans residues 218–262; sequence PSPSSVSRKAVGSMPTAGSAGSVPENLNLFPEPGSKSEETGKKQL. Basic and acidic residues predominate over residues 252 to 262; it reads SKSEETGKKQL. An interaction with PICALM region spans residues 339-428; it reads MGGMQASMMG…NQTLSPQMWK (90 aa).

As to quaternary structure, interacts with ARF1. Interacts with PICALM and clathrin heavy chains.

It localises to the cytoplasm. GTPase activating protein that acts on ARF1. Can also activate ARF6 (in vitro). May play a role in clathrin-dependent retrograde transport from early endosomes to the trans-Golgi network. The polypeptide is Stromal membrane-associated protein 2 (Smap2) (Mus musculus (Mouse)).